The chain runs to 234 residues: Protein UL20 homolog (234 aa).

4 consecutive transmembrane segments (helical) span residues 82–102 (VVLF…IFLF), 112–132 (FLIL…LEMY), 153–173 (IGAL…NMIF), and 191–211 (TSGF…ITSI).

This sequence belongs to the alphaherpesvirinae UL20 family. As to quaternary structure, interacts with gK (via N-terminus); this interaction plays a role in the coordinate transport of UL20 and gK to the trans-Golgi network (TGN), and is required for their cell surface expression. Interacts with gB.

Its subcellular location is the virion. It localises to the host cell membrane. It is found in the host endosome membrane. The protein resides in the host Golgi apparatus membrane. The protein localises to the host nucleus membrane. Functionally, plays an essential role in egress of virus particles from the nucleus, cytoplasmic envelopment and virus-induced cell fusion. Forms a functional protein complex with gK and this interaction is absolutely essential for their coordinate intracellular transport, gK glycosylation, expression on host cell surface, and function. Together, they modulate gB-mediated virus-induced cell fusion and virion egress and therefore actively participate in these processes. The protein is Protein UL20 homolog (MDV032) of Gallid herpesvirus 2 (strain Chicken/Md5/ATCC VR-987) (GaHV-2).